Consider the following 404-residue polypeptide: uncharacterized protein (404 aa).

Belongs to the lymphocryptovirus BTRF1 family.

This is an uncharacterized protein from Homo sapiens (Human).